An 85-amino-acid chain; its full sequence is uncharacterized protein (85 aa).

This is an uncharacterized protein from Acidianus filamentous virus 2 (isolate Italy/Pozzuoli) (AFV-2).